We begin with the raw amino-acid sequence, 463 residues long: Lactaldehyde dehydrogenase (463 aa).

220 to 225 (GSSKVG) provides a ligand contact to NAD(+). Catalysis depends on residues Glu240 and Cys274.

This sequence belongs to the aldehyde dehydrogenase family. Homotetramer.

It carries out the reaction (S)-lactaldehyde + NAD(+) + H2O = (S)-lactate + NADH + 2 H(+). Its pathway is cofactor biosynthesis; coenzyme F420 biosynthesis. Involved in F420 biosynthesis through the oxidation of lactaldehyde to lactate. The substrate preference order is propionaldehyde &gt; DL-lactaldehyde, DL-glyceraldehyde &gt; crotonaldehyde &gt; glycolaldehyde &gt; acetaldehyde, acrolein &gt; formaldehyde. No activity was observed towards methylglyoxal or glyceraldehyde-3-phosphate. Has a preference for NAD over NADP. This chain is Lactaldehyde dehydrogenase, found in Methanocaldococcus jannaschii (strain ATCC 43067 / DSM 2661 / JAL-1 / JCM 10045 / NBRC 100440) (Methanococcus jannaschii).